The chain runs to 496 residues: Lysine--tRNA ligase (496 aa).

Glu-408 and Glu-415 together coordinate Mg(2+).

The protein belongs to the class-II aminoacyl-tRNA synthetase family. As to quaternary structure, homodimer. Mg(2+) serves as cofactor.

The protein resides in the cytoplasm. It catalyses the reaction tRNA(Lys) + L-lysine + ATP = L-lysyl-tRNA(Lys) + AMP + diphosphate. The polypeptide is Lysine--tRNA ligase (Legionella pneumophila (strain Paris)).